We begin with the raw amino-acid sequence, 287 residues long: 4-hydroxybenzoate octaprenyltransferase (287 aa).

Transmembrane regions (helical) follow at residues 7 to 27 (FISY…LLLW), 30 to 50 (LWAL…LIFV), 94 to 114 (VAVA…LNAF), 118 to 138 (LSVL…FFAM), 142 to 162 (VLGI…LDFI), 167 to 187 (WFLF…YAMV), 209 to 229 (VVVI…VAQL), 235 to 255 (YFLV…KLVS), and 266 to 286 (FRHN…GLGV).

The protein belongs to the UbiA prenyltransferase family. It depends on Mg(2+) as a cofactor.

It is found in the cell inner membrane. It carries out the reaction all-trans-octaprenyl diphosphate + 4-hydroxybenzoate = 4-hydroxy-3-(all-trans-octaprenyl)benzoate + diphosphate. It functions in the pathway cofactor biosynthesis; ubiquinone biosynthesis. In terms of biological role, catalyzes the prenylation of para-hydroxybenzoate (PHB) with an all-trans polyprenyl group. Mediates the second step in the final reaction sequence of ubiquinone-8 (UQ-8) biosynthesis, which is the condensation of the polyisoprenoid side chain with PHB, generating the first membrane-bound Q intermediate 3-octaprenyl-4-hydroxybenzoate. The polypeptide is 4-hydroxybenzoate octaprenyltransferase (Polynucleobacter necessarius subsp. necessarius (strain STIR1)).